The primary structure comprises 204 residues: MAEAERIIGTPDIPDAAGEGQERPDADPEREQQEQEQAPERTRGKRRVAVLFAVALFAYLLDLGSKMLVVAKLEHHEPIEIIGDWLRFAAIRNAGAAFGFGEAFTIIFTVIAAAVIVVIARLARKLHSLPWAIALGLLLGGALGNLTDRIFRAPGVFEGAVVDFIAPKHFAVFNLADSAIVCGGILIVILSFRGLDPDGTVHKD.

A disordered region spans residues Met-1–Thr-42. Residues Gly-20–Thr-42 are compositionally biased toward basic and acidic residues. 3 consecutive transmembrane segments (helical) span residues Val-50–Val-70, Phe-100–Ala-120, and Leu-126–Leu-146. Catalysis depends on residues Asp-163 and Asp-177. A helical transmembrane segment spans residues Phe-170 to Leu-190.

It belongs to the peptidase A8 family.

Its subcellular location is the cell membrane. It carries out the reaction Release of signal peptides from bacterial membrane prolipoproteins. Hydrolyzes -Xaa-Yaa-Zaa-|-(S,diacylglyceryl)Cys-, in which Xaa is hydrophobic (preferably Leu), and Yaa (Ala or Ser) and Zaa (Gly or Ala) have small, neutral side chains.. Its pathway is protein modification; lipoprotein biosynthesis (signal peptide cleavage). This protein specifically catalyzes the removal of signal peptides from prolipoproteins. The sequence is that of Lipoprotein signal peptidase from Streptomyces coelicolor (strain ATCC BAA-471 / A3(2) / M145).